The following is a 184-amino-acid chain: Photosystem I assembly protein Ycf4 (184 aa).

The next 2 membrane-spanning stretches (helical) occupy residues 21-41 (YFWA…GLSS) and 63-83 (IIMT…WLTI).

Belongs to the Ycf4 family.

The protein resides in the plastid. Its subcellular location is the chloroplast thylakoid membrane. Seems to be required for the assembly of the photosystem I complex. This Gracilaria tenuistipitata var. liui (Red alga) protein is Photosystem I assembly protein Ycf4.